Consider the following 96-residue polypeptide: Probable RNA-binding protein YqeI (96 aa).

The 96-residue stretch at 1 to 96 folds into the CRM domain; sequence MLTGKQKRFL…SKENKQIELP (96 aa).

The protein is Probable RNA-binding protein YqeI (yqeI) of Bacillus subtilis (strain 168).